Reading from the N-terminus, the 423-residue chain is GPI mannosyltransferase 2 (423 aa).

Transmembrane regions (helical) follow at residues 7-27 (LTLIFIAACLSRILHLTILSG), 102-122 (VILGGTIVANVAFVAATLVLY), 128-148 (IFNPTFAFLTSLLYLLPPTAT), 151-171 (APYTEPIYSLLTFSGIYLLSI), 191-211 (TGIFNSITLMCFAVFGDAHIF), 228-248 (FLSAILVVAPFFMFQHYTETV), 298-318 (LAMPILFSSLAGVVKFFSHLV), 333-353 (PPPILFELYSVHVLTMALLLF), and 400-420 (YWIGWTVVWGAVAAVLWAGHY).

Belongs to the PIGV family.

It is found in the endoplasmic reticulum membrane. It participates in glycolipid biosynthesis; glycosylphosphatidylinositol-anchor biosynthesis. Mannosyltransferase involved in glycosylphosphatidylinositol-anchor biosynthesis. Transfers the second mannose to the glycosylphosphatidylinositol during GPI precursor assembly. The chain is GPI mannosyltransferase 2 (GPI18) from Cryptococcus neoformans var. neoformans serotype D (strain B-3501A) (Filobasidiella neoformans).